We begin with the raw amino-acid sequence, 236 residues long: MEILPAIDLKNGFAVRLKKGEMNSAKIYSDKPWELAEKFADLGAKWLHIVDLDGAFAGEAKNAKTIEKIVKSTNLKIEVGGGIRDEERIKFYKNSGVSRFILGSAALKNPEFVKQMAKKYKIAVGIDAKNGFVATEGWAEVSNIKACELAKIYADAGVEAIICTDISKDGMLSGVNVKFSEEIAKSSGIKTIASGGVKDLSDIKALKQSGKIYGVIVGKAYYEGSIDLKEAFLIAK.

Aspartate 8 acts as the Proton acceptor in catalysis. Aspartate 127 (proton donor) is an active-site residue.

This sequence belongs to the HisA/HisF family.

It localises to the cytoplasm. The enzyme catalyses 1-(5-phospho-beta-D-ribosyl)-5-[(5-phospho-beta-D-ribosylamino)methylideneamino]imidazole-4-carboxamide = 5-[(5-phospho-1-deoxy-D-ribulos-1-ylimino)methylamino]-1-(5-phospho-beta-D-ribosyl)imidazole-4-carboxamide. Its pathway is amino-acid biosynthesis; L-histidine biosynthesis; L-histidine from 5-phospho-alpha-D-ribose 1-diphosphate: step 4/9. This is 1-(5-phosphoribosyl)-5-[(5-phosphoribosylamino)methylideneamino] imidazole-4-carboxamide isomerase from Campylobacter hominis (strain ATCC BAA-381 / DSM 21671 / CCUG 45161 / LMG 19568 / NCTC 13146 / CH001A).